Here is a 127-residue protein sequence, read N- to C-terminus: Large ribosomal subunit protein bL19 (127 aa).

It belongs to the bacterial ribosomal protein bL19 family.

Its function is as follows. This protein is located at the 30S-50S ribosomal subunit interface and may play a role in the structure and function of the aminoacyl-tRNA binding site. The protein is Large ribosomal subunit protein bL19 of Jannaschia sp. (strain CCS1).